Here is a 466-residue protein sequence, read N- to C-terminus: Citrate synthase, mitochondrial (466 aa).

The transit peptide at 1-27 (MALLTAAARLFGAKNASCLVLAARHAS) directs the protein to the mitochondrion. The short motif at 2–21 (ALLTAAARLFGAKNASCLVL) is the SIFI-degron element. The residue at position 57 (K57) is an N6-succinyllysine. K76 is modified (N6-acetyllysine; alternate). N6-succinyllysine; alternate is present on K76. N6-succinyllysine is present on residues K103 and K193. At S226 the chain carries Phosphoserine. H301 is an active-site residue. K321 and K327 each carry N6-acetyllysine; alternate. An N6-succinyllysine; alternate mark is found at K321 and K327. H347 is a catalytic residue. R356 lines the oxaloacetate pocket. The residue at position 375 (K375) is an N6-acetyllysine; alternate. At K375 the chain carries N6-succinyllysine; alternate. The residue at position 382 (K382) is an N6-acetyllysine. K393 carries the post-translational modification N6-acetyllysine; alternate. N6-succinyllysine; alternate is present on K393. An N6,N6,N6-trimethyllysine modification is found at K395. Residue D402 is part of the active site. Oxaloacetate is bound by residues R428 and R448. N6-succinyllysine is present on K450. Residue K459 is modified to N6-acetyllysine; alternate. K459 carries the N6-succinyllysine; alternate modification.

It belongs to the citrate synthase family. As to quaternary structure, homodimer. Methylated. Trimethylation at Lys-395 by CSKMT decreases citrate synthase activity. Post-translationally, in response to mitochondrial stress, the precursor protein is ubiquitinated by the SIFI complex in the cytoplasm before mitochondrial import, leading to its degradation. Within the SIFI complex, UBR4 initiates ubiquitin chain that are further elongated or branched by KCMF1.

The protein resides in the mitochondrion matrix. The catalysed reaction is oxaloacetate + acetyl-CoA + H2O = citrate + CoA + H(+). It participates in carbohydrate metabolism; tricarboxylic acid cycle; isocitrate from oxaloacetate: step 1/2. Key enzyme of the Krebs tricarboxylic acid cycle which catalyzes the synthesis of citrate from acetyl coenzyme A and oxaloacetate. The polypeptide is Citrate synthase, mitochondrial (CS) (Bos taurus (Bovine)).